The sequence spans 364 residues: D-alanine--D-alanine ligase (364 aa).

An ATP-grasp domain is found at K141 to A346. E174–E229 is an ATP binding site. Residues D300, E313, and N315 each coordinate Mg(2+).

Belongs to the D-alanine--D-alanine ligase family. The cofactor is Mg(2+). Mn(2+) is required as a cofactor.

It is found in the cytoplasm. It catalyses the reaction 2 D-alanine + ATP = D-alanyl-D-alanine + ADP + phosphate + H(+). It participates in cell wall biogenesis; peptidoglycan biosynthesis. In terms of biological role, cell wall formation. In Geobacillus thermodenitrificans (strain NG80-2), this protein is D-alanine--D-alanine ligase.